Consider the following 277-residue polypeptide: Pantothenate synthetase (277 aa).

An ATP-binding site is contributed by 26–33 (MGNLHAGH). Histidine 33 (proton donor) is an active-site residue. Glutamine 57 provides a ligand contact to (R)-pantoate. Glutamine 57 provides a ligand contact to beta-alanine. Residue 143–146 (GEKD) participates in ATP binding. (R)-pantoate is bound at residue glutamine 149. ATP contacts are provided by residues valine 172 and 180-183 (LSSR).

Belongs to the pantothenate synthetase family. As to quaternary structure, homodimer.

Its subcellular location is the cytoplasm. The catalysed reaction is (R)-pantoate + beta-alanine + ATP = (R)-pantothenate + AMP + diphosphate + H(+). The protein operates within cofactor biosynthesis; (R)-pantothenate biosynthesis; (R)-pantothenate from (R)-pantoate and beta-alanine: step 1/1. Functionally, catalyzes the condensation of pantoate with beta-alanine in an ATP-dependent reaction via a pantoyl-adenylate intermediate. This is Pantothenate synthetase from Nitrosomonas europaea (strain ATCC 19718 / CIP 103999 / KCTC 2705 / NBRC 14298).